The sequence spans 302 residues: Glycine--tRNA ligase alpha subunit (302 aa).

This sequence belongs to the class-II aminoacyl-tRNA synthetase family. In terms of assembly, tetramer of two alpha and two beta subunits.

The protein resides in the cytoplasm. The enzyme catalyses tRNA(Gly) + glycine + ATP = glycyl-tRNA(Gly) + AMP + diphosphate. This Xanthomonas oryzae pv. oryzae (strain MAFF 311018) protein is Glycine--tRNA ligase alpha subunit.